Consider the following 225-residue polypeptide: MASLCLSSSRIVSLHHQKPFLSLKLRSRPSDLSGLGRHTSPVCFNPLRLSGDRQRTATVSTRVEKRRKRGSSVVCYAAPISANSLQWISTISCLALMLARGTGIHKSVVVPLFALHAPSSIVAWIKGEYGVWAAFLALIARLFFTFPGELELPFIALLLVIVAPYQVMNIRGKQEGAIIAIAISGFLAFQHFSRAGSLEKAYEKGSVLATVAIIGVTVVSLLLLL.

The transit peptide at 1-76 directs the protein to the chloroplast; that stretch reads MASLCLSSSR…RKRGSSVVCY (76 aa). A topological domain (stromal) is located at residue alanine 77. The chain crosses the membrane as a helical span at residues 78-98; the sequence is APISANSLQWISTISCLALML. Over 99–102 the chain is Chloroplast intermembrane; that stretch reads ARGT. A helical transmembrane segment spans residues 103–123; it reads GIHKSVVVPLFALHAPSSIVA. Topologically, residues 124–128 are stromal; sequence WIKGE. Residues 129 to 149 traverse the membrane as a helical segment; sequence YGVWAAFLALIARLFFTFPGE. Over 150-151 the chain is Chloroplast intermembrane; it reads LE. The helical transmembrane segment at 152–172 threads the bilayer; it reads LPFIALLLVIVAPYQVMNIRG. Topologically, residues 173 to 175 are stromal; that stretch reads KQE. Residues 176-196 traverse the membrane as a helical segment; the sequence is GAIIAIAISGFLAFQHFSRAG. Residues 197–204 lie on the Chloroplast intermembrane side of the membrane; the sequence is SLEKAYEK. The helical transmembrane segment at 205 to 225 threads the bilayer; the sequence is GSVLATVAIIGVTVVSLLLLL.

The protein belongs to the Cold-regulated 413 protein family.

Its subcellular location is the plastid. The protein resides in the chloroplast inner membrane. The sequence is that of Cold-regulated 413 inner membrane protein 1, chloroplastic (COR413IM1) from Arabidopsis thaliana (Mouse-ear cress).